The primary structure comprises 364 residues: G-protein coupled receptor 4 (364 aa).

Residues 1–8 are Extracellular-facing; the sequence is MCNVSQDS. A glycan (N-linked (GlcNAc...) asparagine) is linked at asparagine 3. The chain crosses the membrane as a helical span at residues 9–45; that stretch reads CNIDSRLDSLFPPTLYIFVMVIGFPTNCLSLWAAFVQ. Disulfide bonds link cysteine 9–cysteine 258 and cysteine 90–cysteine 168. Residues 46-49 lie on the Cytoplasmic side of the membrane; sequence VRQK. Residues 50 to 80 traverse the membrane as a helical segment; sequence NELGVYLLNLSISDLLYIATLPPWVNYFLHQ. Residues 81–85 lie on the Extracellular side of the membrane; it reads DNWIH. The chain crosses the membrane as a helical span at residues 86 to 121; the sequence is GPESCKLFGFILYTNIYISIGFLSCISVDRYLAVAH. Residues 122–129 lie on the Cytoplasmic side of the membrane; that stretch reads PLKFAKVR. The helical transmembrane segment at 130 to 156 threads the bilayer; it reads RVKTAAVVSAVVWAIEIGANSAPLFHN. The Extracellular portion of the chain corresponds to 157–172; sequence ELFEDRFNHTFCFEKY. The interval 157–172 is extracellular loop 2 (ECL2); it reads ELFEDRFNHTFCFEKY. An N-linked (GlcNAc...) asparagine glycan is attached at asparagine 164. The chain crosses the membrane as a helical span at residues 173-210; that stretch reads PMEDWVAQMNLYRVFVGFLFPWVLMLFCYQGILRAVKT. The Cytoplasmic portion of the chain corresponds to 211–214; that stretch reads NVST. A helical membrane pass occupies residues 215–250; sequence EREEKAKIKRLALSLIAILLFCFAPYHLILLSRSVV. The Extracellular portion of the chain corresponds to 251–260; it reads YLGQPCDCTF. The chain crosses the membrane as a helical span at residues 261–289; sequence EENIFTAYHVSLALTSLNCVADPILYCLA. Residues 290–364 are Cytoplasmic-facing; sequence NEGARSEVTR…RVRRRRDCKC (75 aa).

It belongs to the G-protein coupled receptor 1 family.

The protein resides in the cell membrane. Activated by a network of residues that connects an extracellular-facing cavity to Glu-145, a conserved charged residue buried in the transmembrane core of the receptor. Protonation likely drives conformational changes in extracellular loop 2 (ECL2), which stabilizes movement of transmembrane 3 (TM3) and a series of rearrangements that connect the extracellular-facing cavity to Glu-145, a residue only conserved in proton-sensing G-protein coupled receptors. In terms of biological role, proton-sensing G-protein coupled receptor activated by extracellular pH, which is required to monitor pH changes and generate adaptive reactions. Ligand binding causes a conformation change that triggers signaling via guanine nucleotide-binding proteins (G proteins) and modulates the activity of downstream effectors, such as adenylate cyclase. The chain is G-protein coupled receptor 4 from Callorhinchus milii (Ghost shark).